The following is a 39-amino-acid chain: Protein MchX (39 aa).

Residues 15–37 (SALSSTLLLSLIMSATLLEYSLS) form a helical membrane-spanning segment.

The protein localises to the cell inner membrane. Its function is as follows. Required for microcin H47 production. Possibly involved in a regulatory loop modulating its own expression and that of MchI and MchB. In Escherichia coli, this protein is Protein MchX (mchX).